We begin with the raw amino-acid sequence, 187 residues long: Elongation factor P (187 aa).

The protein belongs to the elongation factor P family.

It is found in the cytoplasm. It participates in protein biosynthesis; polypeptide chain elongation. Involved in peptide bond synthesis. Stimulates efficient translation and peptide-bond synthesis on native or reconstituted 70S ribosomes in vitro. Probably functions indirectly by altering the affinity of the ribosome for aminoacyl-tRNA, thus increasing their reactivity as acceptors for peptidyl transferase. The polypeptide is Elongation factor P (Parasynechococcus marenigrum (strain WH8102)).